Reading from the N-terminus, the 57-residue chain is KCFDHRKERRIIDHIKTTLNHSTLYIYGSVQRSKHYYFTVCTEQGEVLYSFNQVIHS.

Residues 6-10 carry the Nuclear localization signal motif; that stretch reads RKERR.

As to expression, mesophyll protoplasts.

The protein resides in the nucleus. In terms of biological role, stress response. May play a role in the reentering of protoplasts into the cell cycle. This chain is Stress response protein, found in Nicotiana sylvestris (Wood tobacco).